We begin with the raw amino-acid sequence, 146 residues long: uncharacterized protein (146 aa).

In terms of domain architecture, N-acetyltransferase spans leucine 7–proline 146.

This is an uncharacterized protein from Staphylococcus aureus (strain COL).